Reading from the N-terminus, the 627-residue chain is uncharacterized protein (627 aa).

This is an uncharacterized protein from Caenorhabditis elegans.